The primary structure comprises 428 residues: Glutamate-1-semialdehyde 2,1-aminomutase 1 (428 aa).

Position 267 is an N6-(pyridoxal phosphate)lysine (lysine 267).

This sequence belongs to the class-III pyridoxal-phosphate-dependent aminotransferase family. HemL subfamily. As to quaternary structure, homodimer. Pyridoxal 5'-phosphate is required as a cofactor.

It localises to the cytoplasm. It carries out the reaction (S)-4-amino-5-oxopentanoate = 5-aminolevulinate. Its pathway is porphyrin-containing compound metabolism; protoporphyrin-IX biosynthesis; 5-aminolevulinate from L-glutamyl-tRNA(Glu): step 2/2. The sequence is that of Glutamate-1-semialdehyde 2,1-aminomutase 1 from Staphylococcus aureus (strain MW2).